A 253-amino-acid chain; its full sequence is Distal tail protein (253 aa).

Homohexamer.

It localises to the virion. Its function is as follows. Forms a 40 Angstroms wide channel at the distal tip of the tail. Remains associated to the tail after DNA ejection. The protein is Distal tail protein of Bacillus phage SPP1 (Bacteriophage SPP1).